The sequence spans 267 residues: Small ribosomal subunit protein uS10m (267 aa).

The N-terminal 10 residues, 1 to 10 (MLSRILGVRN), are a transit peptide targeting the mitochondrion.

Belongs to the universal ribosomal protein uS10 family. As to quaternary structure, part of the mitochondrial small ribosomal subunit.

It localises to the mitochondrion. Its function is as follows. Involved in mitochondrial genome encoded proteins translation. Involved in the binding of tRNA to the ribosomes. The polypeptide is Small ribosomal subunit protein uS10m (RSM10) (Debaryomyces hansenii (strain ATCC 36239 / CBS 767 / BCRC 21394 / JCM 1990 / NBRC 0083 / IGC 2968) (Yeast)).